The sequence spans 389 residues: Chorismate synthase (389 aa).

Positions 40 and 46 each coordinate NADP(+). Residues 131–133 (RSS), 252–253 (NA), Gly297, 312–316 (KPIPT), and Arg338 contribute to the FMN site.

Belongs to the chorismate synthase family. Homotetramer. The cofactor is FMNH2.

The catalysed reaction is 5-O-(1-carboxyvinyl)-3-phosphoshikimate = chorismate + phosphate. The protein operates within metabolic intermediate biosynthesis; chorismate biosynthesis; chorismate from D-erythrose 4-phosphate and phosphoenolpyruvate: step 7/7. In terms of biological role, catalyzes the anti-1,4-elimination of the C-3 phosphate and the C-6 proR hydrogen from 5-enolpyruvylshikimate-3-phosphate (EPSP) to yield chorismate, which is the branch point compound that serves as the starting substrate for the three terminal pathways of aromatic amino acid biosynthesis. This reaction introduces a second double bond into the aromatic ring system. The sequence is that of Chorismate synthase from Lactiplantibacillus plantarum (strain ATCC BAA-793 / NCIMB 8826 / WCFS1) (Lactobacillus plantarum).